The following is an 830-amino-acid chain: Ribosome biogenesis protein ERB1 (830 aa).

The tract at residues 1–141 (MAPQPLKVGT…ENKDLPVDEK (141 aa)) is disordered. Composition is skewed to acidic residues over residues 35–44 (VSEESDEEFG) and 52–109 (MSDD…DSDS). Positions 131-141 (EENKDLPVDEK) are enriched in basic and acidic residues. WD repeat units lie at residues 481–520 (PGDT…EVWR), 523–563 (LHAG…APHI), 660–698 (KTPG…LIRT), 701–740 (SGVK…KPYK), 744–783 (YHNR…DLMQ), and 799–830 (IDGI…LWCS).

The protein belongs to the WD repeat BOP1/ERB1 family. In terms of assembly, component of the NOP7 complex, composed of ERB1, NOP7 and YTM1. The complex is held together by ERB1, which interacts with NOP7 via its N-terminal domain and with YTM1 via a high-affinity interaction between the seven-bladed beta-propeller domains of the 2 proteins. The NOP7 complex associates with the 66S pre-ribosome.

It localises to the nucleus. The protein resides in the nucleolus. It is found in the nucleoplasm. Its function is as follows. Component of the NOP7 complex, which is required for maturation of the 25S and 5.8S ribosomal RNAs and formation of the 60S ribosome. This Cryptococcus neoformans var. neoformans serotype D (strain B-3501A) (Filobasidiella neoformans) protein is Ribosome biogenesis protein ERB1.